We begin with the raw amino-acid sequence, 196 residues long: ECF RNA polymerase sigma factor SigK (196 aa).

Residues Tyr39–Gln105 are sigma-70 factor domain-2. The Polymerase core binding signature appears at Glu62–Gln65. Residues Cys142 to Lys191 form a sigma-70 factor domain-4 region. The H-T-H motif DNA-binding region spans Tyr164–Arg183.

It belongs to the sigma-70 factor family. ECF subfamily. As to quaternary structure, interacts transiently with the RNA polymerase catalytic core formed by RpoA, RpoB, RpoC and RpoZ (2 alpha, 1 beta, 1 beta' and 1 omega subunit) to form the RNA polymerase holoenzyme that can initiate transcription. Interacts (via sigma-70 factor domain 4) with anti-sigma-K factor RskA.

Its function is as follows. Sigma factors are initiation factors that promote the attachment of RNA polymerase to specific initiation sites and are then released. Extracytoplasmic function (ECF) sigma factors are held in an inactive form by an anti-sigma factor until released by regulated intramembrane proteolysis. The chain is ECF RNA polymerase sigma factor SigK (sigK) from Mycolicibacterium vanbaalenii (strain DSM 7251 / JCM 13017 / BCRC 16820 / KCTC 9966 / NRRL B-24157 / PYR-1) (Mycobacterium vanbaalenii).